Reading from the N-terminus, the 330-residue chain is Beta-ketoacyl-[acyl-carrier-protein] synthase III (330 aa).

Catalysis depends on residues Cys111 and His249. Residues 250-254 are ACP-binding; sequence QANTR. Asn279 is an active-site residue.

This sequence belongs to the thiolase-like superfamily. FabH family. As to quaternary structure, homodimer.

The protein localises to the cytoplasm. It carries out the reaction malonyl-[ACP] + acetyl-CoA + H(+) = 3-oxobutanoyl-[ACP] + CO2 + CoA. Its pathway is lipid metabolism; fatty acid biosynthesis. In terms of biological role, catalyzes the condensation reaction of fatty acid synthesis by the addition to an acyl acceptor of two carbons from malonyl-ACP. Catalyzes the first condensation reaction which initiates fatty acid synthesis and may therefore play a role in governing the total rate of fatty acid production. Possesses both acetoacetyl-ACP synthase and acetyl transacylase activities. Its substrate specificity determines the biosynthesis of branched-chain and/or straight-chain of fatty acids. The protein is Beta-ketoacyl-[acyl-carrier-protein] synthase III of Pseudomonas aeruginosa (strain LESB58).